The sequence spans 184 residues: Intraflagellar transport protein 22 homolog (184 aa).

GTP contacts are provided by residues 10–17 (GPTESGKT), 62–66 (DCGGD), and 122–125 (KKPG).

This sequence belongs to the small GTPase superfamily. Rab family.

The protein is Intraflagellar transport protein 22 homolog (ift22) of Xenopus tropicalis (Western clawed frog).